The following is a 176-amino-acid chain: Small ribosomal subunit protein uS5 (176 aa).

In terms of domain architecture, S5 DRBM spans 11 to 74 (LSEVLVDVNR…QAAKKKMMKV (64 aa)).

This sequence belongs to the universal ribosomal protein uS5 family. Part of the 30S ribosomal subunit. Contacts proteins S4 and S8.

Functionally, with S4 and S12 plays an important role in translational accuracy. Located at the back of the 30S subunit body where it stabilizes the conformation of the head with respect to the body. The polypeptide is Small ribosomal subunit protein uS5 (Rickettsia bellii (strain RML369-C)).